Consider the following 146-residue polypeptide: UPF0178 protein CTC_02403 (146 aa).

Belongs to the UPF0178 family.

The protein is UPF0178 protein CTC_02403 of Clostridium tetani (strain Massachusetts / E88).